Consider the following 200-residue polypeptide: Golgi to ER traffic protein 1 (200 aa).

Residues 1–6 (MEPYTL) are Lumenal-facing. Residues 7 to 26 (LLFIFVIQIVKQIISAVGKQ) form a helical membrane-spanning segment. Residues 27 to 113 (SIESISWVLY…KVNTFTGYLI (87 aa)) are Cytoplasmic-facing. Positions 75-107 (AKWTKLNRQHDKLVAEIEQLQKEVDLDKVKVNT) form a coiled coil. Residues 114 to 134 (AILTSIPIWFFRVWYRSVVLF) form a helical membrane-spanning segment. Over 135–158 (YFPPGILPRALEWSIALPFTVTGG) the chain is Lumenal. A helical membrane pass occupies residues 159–175 (VSLTVWMMAAGAVASSL). The Cytoplasmic segment spans residues 176–200 (TFLFMFPFEKAVPKPVLAKKSPQQL).

It belongs to the WRB/GET1 family. In terms of assembly, component of the Golgi to ER traffic (GET) complex, which is composed of GET1, GET2 and GET3. Within the complex, GET1 and GET2 form a heterotetramer which is stabilized by phosphatidylinositol binding and which binds to the GET3 homodimer.

The protein localises to the endoplasmic reticulum membrane. It is found in the golgi apparatus membrane. Required for the post-translational delivery of tail-anchored (TA) proteins to the endoplasmic reticulum. Together with GET2, acts as a membrane receptor for soluble GET3, which recognizes and selectively binds the transmembrane domain of TA proteins in the cytosol. The GET complex cooperates with the HDEL receptor ERD2 to mediate the ATP-dependent retrieval of resident ER proteins that contain a C-terminal H-D-E-L retention signal from the Golgi to the ER. The protein is Golgi to ER traffic protein 1 of Meyerozyma guilliermondii (strain ATCC 6260 / CBS 566 / DSM 6381 / JCM 1539 / NBRC 10279 / NRRL Y-324) (Yeast).